We begin with the raw amino-acid sequence, 213 residues long: Penicillin-binding protein activator LpoB (213 aa).

The first 19 residues, 1-19, serve as a signal peptide directing secretion; the sequence is MTKMSRYALITALAMFLAG. C20 carries the N-palmitoyl cysteine lipid modification. C20 is lipidated: S-diacylglycerol cysteine. A disordered region spans residues 28–74; sequence PVEEVKPAPEQPAEPQQPVPTVPSVPTIPQQPGPIEHEDQTAPPAPH. The segment covering 36 to 50 has biased composition (pro residues); that stretch reads PEQPAEPQQPVPTVP.

This sequence belongs to the LpoB family. In terms of assembly, interacts with PBP1b.

It is found in the cell outer membrane. Its function is as follows. Regulator of peptidoglycan synthesis that is essential for the function of penicillin-binding protein 1B (PBP1b). This chain is Penicillin-binding protein activator LpoB, found in Escherichia coli O157:H7.